A 385-amino-acid chain; its full sequence is Zinc cluster transcription factor CZF1 (385 aa).

A compositionally biased stretch (polar residues) spans 1 to 19 (MSSIPNINWNDPNNGKSNT). 3 disordered regions span residues 1-117 (MSSI…QQPL), 154-216 (LQQR…QQWD), and 233-308 (SSIQ…KPIT). Low complexity predominate over residues 20–38 (SRQSQPQPQLPSNVSPPNS). Composition is skewed to polar residues over residues 52–67 (YGSSQFSNEYSRNPNT) and 88–97 (YPVQQTAQQR). Low complexity-rich tracts occupy residues 102-117 (LQQVHSQQQQQQQQPL) and 154-169 (LQQRQQAQGQQLKSQL). The span at 170 to 200 (NEQNAMMSASTQQYPVQDFTNPYPNAQNPAE) shows a compositional bias: polar residues. 2 stretches are compositionally biased toward low complexity: residues 201–214 (QQQQQQPLRTQSQQ) and 233–256 (SSIQQQIPPQNLSPSEQQQVKQQQ). Basic residues predominate over residues 265 to 275 (KKKPGRKPKLR). The segment covering 279 to 291 (ESSSETPQVPKTA) has biased composition (polar residues). The zn(2)-C6 fungal-type DNA-binding region spans 315-342 (CLTCRQRKKRCCETRPRCTECTRLRLNC). The segment at 345-364 (PKPGTEHKNKPKDQKDDENT) is disordered. A compositionally biased stretch (basic and acidic residues) spans 348-364 (GTEHKNKPKDQKDDENT).

In terms of assembly, interacts with EFG1.

It localises to the nucleus. Transcriptional regulator of the switch between 2 heritable states, the white and opaque states. These 2 cell types differ in many characteristics, including cell structure, mating competence, and virulence. Each state is heritable for many generations, and switching between states occurs stochastically, at low frequency. Contributes to formation of the opaque state, but is not necessary for heritability of the opaque state. Plays a role in cell adhesion and pseudohyphal growth. Involved in acquisition of drug resistance and acts as a repressor of beta-glucan synthesis, thus negatively regulating cell wall integrity. Plays a role in adherence, invasion and damage to oral epithelial cells. The chain is Zinc cluster transcription factor CZF1 (CZF1) from Candida albicans (strain SC5314 / ATCC MYA-2876) (Yeast).